The chain runs to 223 residues: Phosphoribosylformylglycinamidine synthase subunit PurQ (223 aa).

The Glutamine amidotransferase type-1 domain occupies 3 to 223; the sequence is FAVLVFPGSN…MVKSWREQHV (221 aa). The Nucleophile role is filled by cysteine 85. Residues histidine 193 and glutamate 195 contribute to the active site.

As to quaternary structure, part of the FGAM synthase complex composed of 1 PurL, 1 PurQ and 2 PurS subunits.

The protein resides in the cytoplasm. It carries out the reaction N(2)-formyl-N(1)-(5-phospho-beta-D-ribosyl)glycinamide + L-glutamine + ATP + H2O = 2-formamido-N(1)-(5-O-phospho-beta-D-ribosyl)acetamidine + L-glutamate + ADP + phosphate + H(+). The enzyme catalyses L-glutamine + H2O = L-glutamate + NH4(+). It participates in purine metabolism; IMP biosynthesis via de novo pathway; 5-amino-1-(5-phospho-D-ribosyl)imidazole from N(2)-formyl-N(1)-(5-phospho-D-ribosyl)glycinamide: step 1/2. Functionally, part of the phosphoribosylformylglycinamidine synthase complex involved in the purines biosynthetic pathway. Catalyzes the ATP-dependent conversion of formylglycinamide ribonucleotide (FGAR) and glutamine to yield formylglycinamidine ribonucleotide (FGAM) and glutamate. The FGAM synthase complex is composed of three subunits. PurQ produces an ammonia molecule by converting glutamine to glutamate. PurL transfers the ammonia molecule to FGAR to form FGAM in an ATP-dependent manner. PurS interacts with PurQ and PurL and is thought to assist in the transfer of the ammonia molecule from PurQ to PurL. This is Phosphoribosylformylglycinamidine synthase subunit PurQ from Staphylococcus aureus (strain Mu50 / ATCC 700699).